The chain runs to 366 residues: Aminomethyltransferase (366 aa).

This sequence belongs to the GcvT family. As to quaternary structure, the glycine cleavage system is composed of four proteins: P, T, L and H.

The catalysed reaction is N(6)-[(R)-S(8)-aminomethyldihydrolipoyl]-L-lysyl-[protein] + (6S)-5,6,7,8-tetrahydrofolate = N(6)-[(R)-dihydrolipoyl]-L-lysyl-[protein] + (6R)-5,10-methylene-5,6,7,8-tetrahydrofolate + NH4(+). Its function is as follows. The glycine cleavage system catalyzes the degradation of glycine. In Chlorobium chlorochromatii (strain CaD3), this protein is Aminomethyltransferase.